Consider the following 678-residue polypeptide: Probable antibacterial peptide polyprotein (678 aa).

Tandem repeats lie at residues M1–R67, E68–R114, E115–R161, E162–R208, E209–R255, E256–R302, E303–R349, E350–R396, E397–R443, E444–R490, E491–R537, E538–R584, E585–R631, and E632–R678. A 14 X approximate tandem repeats region spans residues M1–R678. O-linked (GalNAc...) threonine glycosylation occurs at T32. Disordered stretches follow at residues S58–L97 and V113–R678. Positions P64–V73 are enriched in basic and acidic residues. O-linked (GalNAc...) threonine glycosylation is found at T83 and T130. The span at E145–L157 shows a compositional bias: low complexity. Basic and acidic residues predominate over residues P158–V167. An O-linked (GalNAc...) threonine glycan is attached at T177. Residues V188–L204 show a composition bias toward low complexity. Over residues P205–V214 the composition is skewed to basic and acidic residues. T224 and T271 each carry an O-linked (GalNAc...) threonine glycan. Positions P299–V308 are enriched in basic and acidic residues. O-linked (GalNAc...) threonine glycosylation occurs at T318. Positions E333 to L345 are enriched in low complexity. Residues P346 to V355 show a composition bias toward basic and acidic residues. T365 carries an O-linked (GalNAc...) threonine glycan. The span at E380–L392 shows a compositional bias: low complexity. Residues P393–V402 show a composition bias toward basic and acidic residues. O-linked (GalNAc...) threonine glycosylation is present at T412. Over residues E427–L439 the composition is skewed to low complexity. Residues P440–V449 show a composition bias toward basic and acidic residues. Residue T459 is glycosylated (O-linked (GalNAc...) threonine). Residues E474–L486 are compositionally biased toward low complexity. Residues P487 to V496 are compositionally biased toward basic and acidic residues. An O-linked (GalNAc...) threonine glycan is attached at T506. The span at E521–L533 shows a compositional bias: low complexity. Residues P534–V543 show a composition bias toward basic and acidic residues. The O-linked (GalNAc...) threonine glycan is linked to T553. Residues E568–L580 are compositionally biased toward low complexity. A compositionally biased stretch (basic and acidic residues) spans P581–V590. O-linked (GalNAc...) threonine glycosylation occurs at T600. Residues E615 to L627 are compositionally biased toward low complexity. Residue T647 is glycosylated (O-linked (GalNAc...) threonine).

It localises to the secreted. In terms of biological role, has antibacterial activity in vitro. The sequence is that of Probable antibacterial peptide polyprotein from Riptortus clavatus (Bean bug).